The primary structure comprises 424 residues: MKGRVRIRGIYATALTSIFSSLSYEIVQQSVEISERFMQEINNLSADITIKDFEDDRGKIIVMGNGIIEDDLRNVFKYSFHWRSPVKLYSVIEIDESCTYANFKVEPCLREGIVIKPPYDGKIILSETKAVSKYAIVWRGKGITTFSEHIVDEEEKMRLLTLSLPLNRKGYNVKWRSNAKYVALNELKEDLERLILRYENREFRDQGEDFYLITLSLPDKLYLDEVRKNVVDTVKYHHMLKLSYNREVDSLEKDKKGSLGKLLEGLISDFLKIEHIKADGKVIYLRGGKVIEKEVNDNGYRIVLRREFEGNGILDGIGKKIEEGDYDIVEYNSDKWYQIHKYYSGIDNSLKGVYINISTPPELLRGKIRYLDLEIDIAIRDSEIALLDEDELNKKSIYMPSSLVNKAKEVVNYLINRIQQNKLS.

It belongs to the FAU-1 family.

Its function is as follows. Probable RNase involved in rRNA stability through maturation and/or degradation of precursor rRNAs. Binds to RNA in loop regions with AU-rich sequences. This chain is Probable ribonuclease FAU-1, found in Saccharolobus solfataricus (strain ATCC 35092 / DSM 1617 / JCM 11322 / P2) (Sulfolobus solfataricus).